The sequence spans 332 residues: NADH-quinone oxidoreductase subunit H (332 aa).

9 consecutive transmembrane segments (helical) span residues 4–24 (FAFF…IFAS), 44–64 (IGPD…MIKL), 78–98 (FIFA…LAAI), 120–140 (VALL…FLGG), 165–185 (VGAL…LVDI), 194–214 (FSWL…ALFI), 255–275 (IAGA…FWII), 279–299 (IMMI…RAAF), and 312–332 (YLIL…AVLL).

Belongs to the complex I subunit 1 family. NDH-1 is composed of 14 different subunits. Subunits NuoA, H, J, K, L, M, N constitute the membrane sector of the complex.

It is found in the cell inner membrane. The enzyme catalyses a quinone + NADH + 5 H(+)(in) = a quinol + NAD(+) + 4 H(+)(out). In terms of biological role, NDH-1 shuttles electrons from NADH, via FMN and iron-sulfur (Fe-S) centers, to quinones in the respiratory chain. The immediate electron acceptor for the enzyme in this species is believed to be ubiquinone. Couples the redox reaction to proton translocation (for every two electrons transferred, four hydrogen ions are translocated across the cytoplasmic membrane), and thus conserves the redox energy in a proton gradient. This subunit may bind ubiquinone. The protein is NADH-quinone oxidoreductase subunit H of Campylobacter jejuni (strain RM1221).